The primary structure comprises 240 residues: MLIEHERGFVLHVRAWRETSLLVEVLTEQHGRVGLLARGVHGPRKQALRAALQPLQLIQFSAVQRGELAQLRQAEALDTAPRLVGDTMLAGFYISELLLRLAPRNDPVPELYACYTQARTHLAADLPLAWGLRRFERDVLEGLGFAFDLQHDSDGQPIDPAARYRLDPEEGALRVLSERLAQDRRETVTGAALLALGEDVMPAAEDMPGLRRSMRSVLLHHLGGRGLKSWEMLEDLARRR.

Belongs to the RecO family.

Involved in DNA repair and RecF pathway recombination. The protein is DNA repair protein RecO of Xanthomonas oryzae pv. oryzae (strain MAFF 311018).